The following is a 458-amino-acid chain: Transcription factor PCF5 (458 aa).

Disordered regions lie at residues 1–103 (MGDA…RGPR), 159–182 (GAGAGNAAAPPSSSTHPDSAENSD), 278–299 (MFHHQQHRHGGGGGGGNGTTQQ), and 424–458 (RLPARIQGDEEHNGGGGGNGDKPPPPSSVSSASHH). Residues 65–74 (RGGGGGGGGE) show a composition bias toward gly residues. Positions 89–147 (RKDRHSKVCTARGPRDRRVRLSAHTAIQFYDVQDRLGYDRPSKAVDWLIKNAKDAIDKL) constitute a TCP domain.

As to quaternary structure, forms homodimers and heterodimers.

It localises to the nucleus. Its function is as follows. Transcription activator. Binds the promoter core sequence 5'-GGNCC-3'. The polypeptide is Transcription factor PCF5 (PCF5) (Oryza sativa subsp. japonica (Rice)).